Consider the following 478-residue polypeptide: Pyruvate kinase (478 aa).

Arg-36 contributes to the substrate binding site. 3 residues coordinate K(+): Asn-38, Ser-40, and Asp-70. Asn-38–His-41 lines the ATP pocket. The ATP site is built by Arg-77 and Lys-160. Glu-225 is a Mg(2+) binding site. Substrate contacts are provided by Gly-251, Asp-252, and Thr-284. Residue Asp-252 coordinates Mg(2+).

It belongs to the pyruvate kinase family. In terms of assembly, homotetramer. Mg(2+) serves as cofactor. Requires K(+) as cofactor.

It catalyses the reaction pyruvate + ATP = phosphoenolpyruvate + ADP + H(+). It functions in the pathway carbohydrate degradation; glycolysis; pyruvate from D-glyceraldehyde 3-phosphate: step 5/5. Its activity is regulated as follows. Allosterically activated by AMP and by several sugar phosphates. Belongs to type II PK. This Haemophilus influenzae (strain ATCC 51907 / DSM 11121 / KW20 / Rd) protein is Pyruvate kinase (pykA).